A 201-amino-acid chain; its full sequence is 3-isopropylmalate dehydratase small subunit (201 aa).

Belongs to the LeuD family. LeuD type 1 subfamily. As to quaternary structure, heterodimer of LeuC and LeuD.

It catalyses the reaction (2R,3S)-3-isopropylmalate = (2S)-2-isopropylmalate. It functions in the pathway amino-acid biosynthesis; L-leucine biosynthesis; L-leucine from 3-methyl-2-oxobutanoate: step 2/4. Its function is as follows. Catalyzes the isomerization between 2-isopropylmalate and 3-isopropylmalate, via the formation of 2-isopropylmaleate. This is 3-isopropylmalate dehydratase small subunit from Jannaschia sp. (strain CCS1).